Reading from the N-terminus, the 270-residue chain is Ribonuclease HII (270 aa).

An RNase H type-2 domain is found at 28 to 222 (RQVAGADEAG…VSGRQGAPPR (195 aa)). 3 residues coordinate a divalent metal cation: D34, E35, and D128.

The protein belongs to the RNase HII family. Mn(2+) serves as cofactor. It depends on Mg(2+) as a cofactor.

It localises to the cytoplasm. It catalyses the reaction Endonucleolytic cleavage to 5'-phosphomonoester.. Endonuclease that specifically degrades the RNA of RNA-DNA hybrids. In Salinispora tropica (strain ATCC BAA-916 / DSM 44818 / JCM 13857 / NBRC 105044 / CNB-440), this protein is Ribonuclease HII.